We begin with the raw amino-acid sequence, 409 residues long: Elongation factor Tu (409 aa).

The tr-type G domain occupies 10–214 (KPHVNVGTIG…AVDSYIPTPE (205 aa)). Residues 19-26 (GHVDHGKT) form a G1 region. A GTP-binding site is contributed by 19-26 (GHVDHGKT). Mg(2+) is bound at residue Thr-26. Residues 60–64 (GITIN) are G2. Residues 81-84 (DCPG) are G3. GTP-binding positions include 81-85 (DCPGH) and 136-139 (NKAD). The tract at residues 136–139 (NKAD) is G4. Positions 174 to 176 (SAL) are G5.

It belongs to the TRAFAC class translation factor GTPase superfamily. Classic translation factor GTPase family. EF-Tu/EF-1A subfamily. As to quaternary structure, monomer.

It is found in the cytoplasm. It catalyses the reaction GTP + H2O = GDP + phosphate + H(+). In terms of biological role, GTP hydrolase that promotes the GTP-dependent binding of aminoacyl-tRNA to the A-site of ribosomes during protein biosynthesis. The sequence is that of Elongation factor Tu from Synechococcus sp. (strain JA-2-3B'a(2-13)) (Cyanobacteria bacterium Yellowstone B-Prime).